A 339-amino-acid polypeptide reads, in one-letter code: 2,3,4,5-tetrahydropyridine-2,6-dicarboxylate N-succinyltransferase (339 aa).

Residue aspartate 180 coordinates Mg(2+). Glutamate 213 functions as the Acyl-anhydride intermediate in the catalytic mechanism. Succinyl-CoA is bound by residues arginine 215, glycine 230, serine 233, alanine 256, 271-272 (EA), glycine 279, and lysine 300.

The protein belongs to the type 2 tetrahydrodipicolinate N-succinyltransferase family. As to quaternary structure, homotrimer.

Its subcellular location is the cytoplasm. The catalysed reaction is (S)-2,3,4,5-tetrahydrodipicolinate + succinyl-CoA + H2O = (S)-2-succinylamino-6-oxoheptanedioate + CoA. It functions in the pathway amino-acid biosynthesis; L-lysine biosynthesis via DAP pathway; LL-2,6-diaminopimelate from (S)-tetrahydrodipicolinate (succinylase route): step 1/3. Catalyzes the conversion of the cyclic tetrahydrodipicolinate (THDP) into the acyclic N-succinyl-L-2-amino-6-oxopimelate using succinyl-CoA. This is 2,3,4,5-tetrahydropyridine-2,6-dicarboxylate N-succinyltransferase from Bifidobacterium longum (strain NCC 2705).